The chain runs to 286 residues: Pantothenate synthetase (286 aa).

30-37 (MGNLHRGH) contacts ATP. Catalysis depends on histidine 37, which acts as the Proton donor. Glutamine 61 serves as a coordination point for (R)-pantoate. Glutamine 61 is a binding site for beta-alanine. Residue 149 to 152 (GEKD) coordinates ATP. Glutamine 155 serves as a coordination point for (R)-pantoate. Residues valine 178 and 186–189 (LSSR) contribute to the ATP site.

The protein belongs to the pantothenate synthetase family. In terms of assembly, homodimer.

The protein resides in the cytoplasm. The enzyme catalyses (R)-pantoate + beta-alanine + ATP = (R)-pantothenate + AMP + diphosphate + H(+). It functions in the pathway cofactor biosynthesis; (R)-pantothenate biosynthesis; (R)-pantothenate from (R)-pantoate and beta-alanine: step 1/1. Functionally, catalyzes the condensation of pantoate with beta-alanine in an ATP-dependent reaction via a pantoyl-adenylate intermediate. This is Pantothenate synthetase from Nitrosococcus oceani (strain ATCC 19707 / BCRC 17464 / JCM 30415 / NCIMB 11848 / C-107).